The following is a 170-amino-acid chain: Bifunctional protein PyrR (170 aa).

Positions 90–102 match the PRPP-binding motif; that stretch reads LVLIDDVLMSGRT.

Belongs to the purine/pyrimidine phosphoribosyltransferase family. PyrR subfamily.

It catalyses the reaction UMP + diphosphate = 5-phospho-alpha-D-ribose 1-diphosphate + uracil. In terms of biological role, regulates the transcription of the pyrimidine nucleotide (pyr) operon in response to exogenous pyrimidines. Also displays a weak uracil phosphoribosyltransferase activity which is not physiologically significant. The protein is Bifunctional protein PyrR of Pseudomonas syringae pv. tomato (strain ATCC BAA-871 / DC3000).